Reading from the N-terminus, the 121-residue chain is Non-structural protein 8 (121 aa).

Residues 1-15 (MKLLIVFGLLASVYC) form the signal peptide. The SARS ORF8 Ig-like domain occupies 19 to 121 (ECSIQECCEN…HDVRVVLDFI (103 aa)). Intrachain disulfides connect Cys25/Cys90, Cys37/Cys102, and Cys61/Cys83.

This Bat coronavirus HKU3 (BtCoV) protein is Non-structural protein 8.